The primary structure comprises 407 residues: Arginine deiminase (407 aa).

Cys397 functions as the Amidino-cysteine intermediate in the catalytic mechanism.

It belongs to the arginine deiminase family.

The protein resides in the cytoplasm. It catalyses the reaction L-arginine + H2O = L-citrulline + NH4(+). It participates in amino-acid degradation; L-arginine degradation via ADI pathway; carbamoyl phosphate from L-arginine: step 1/2. In Salmonella arizonae (strain ATCC BAA-731 / CDC346-86 / RSK2980), this protein is Arginine deiminase.